A 102-amino-acid polypeptide reads, in one-letter code: Large ribosomal subunit protein bL21 (102 aa).

The protein belongs to the bacterial ribosomal protein bL21 family. In terms of assembly, part of the 50S ribosomal subunit. Contacts protein L20.

This protein binds to 23S rRNA in the presence of protein L20. This chain is Large ribosomal subunit protein bL21, found in Zymomonas mobilis subsp. mobilis (strain ATCC 31821 / ZM4 / CP4).